Consider the following 923-residue polypeptide: Protocadherin gamma-B5 (923 aa).

The first 30 residues, 1 to 30 (MGRGTGELGRAERLPVLFLFLLSLFCPALC), serve as a signal peptide directing secretion. Cadherin domains are found at residues 31-133 (EQIR…TPKF), 134-242 (TQNS…PPVF), 243-343 (NRDV…SPEV), 344-448 (TFHS…APVF), 449-558 (HQAS…APRV), and 566-671 (DGSA…LPDI). Residues 31-687 (EQIRYRIPEE…SDPQAELQFY (657 aa)) lie on the Extracellular side of the membrane. N-linked (GlcNAc...) asparagine glycans are attached at residues N415 and N541. Residues 688–708 (LVVALALISVLFLLAVILAIA) traverse the membrane as a helical segment. The Cytoplasmic portion of the chain corresponds to 709-923 (LRLRRSSSPA…KKKSGKKEKK (215 aa)). Disordered regions lie at residues 794–832 (TSHPELQAPPNTDWRFSQAQRPGTSGSQNGDDTGTWPNN) and 893–923 (ATLTNAAGKRDGKAPAGGNGNKKKSGKKEKK). Over residues 807-832 (WRFSQAQRPGTSGSQNGDDTGTWPNN) the composition is skewed to polar residues. Residues 913-923 (NKKKSGKKEKK) are compositionally biased toward basic residues.

The protein resides in the cell membrane. Functionally, potential calcium-dependent cell-adhesion protein. May be involved in the establishment and maintenance of specific neuronal connections in the brain. This chain is Protocadherin gamma-B5 (PCDHGB5), found in Pan troglodytes (Chimpanzee).